The primary structure comprises 473 residues: Ammonium transporter Rh type C (473 aa).

Residues 1-9 (MLRNSNMRW) are Cytoplasmic-facing. Residues 10 to 30 (RLPLICFVWEIAMIVLFGIFV) form a helical membrane-spanning segment. Residues 31-61 (RYNDEADPHWPIFMKHENITSDIENDFYFRY) are Extracellular-facing. N-linked (GlcNAc...) asparagine glycosylation occurs at asparagine 48. A helical transmembrane segment spans residues 62–82 (PSFQDVHVMIFVGFGFLMTFL). At 83–86 (QRYG) the chain is on the cytoplasmic side. Residues 87-107 (FGSVAFNFLLAAFGIQWALLM) form a helical membrane-spanning segment. Over 108–125 (QGWFHTFVNGKILIGVES) the chain is Extracellular. The chain crosses the membrane as a helical span at residues 126-145 (LINADFCVGSVCIAFGGVLG). Residues 146–151 (KVSPVQ) are Cytoplasmic-facing. Residues 152–171 (IMLMTLFQVTLFAVNEWILL) traverse the membrane as a helical segment. At 172–179 (NKLHVIDA) the chain is on the extracellular side. The helical transmembrane segment at 180 to 200 (GGSMTIHTFGAYFGLTVAWIL) threads the bilayer. At 201-219 (SRPKLKQNNDKEGSTYISD) the chain is on the cytoplasmic side. Residues 220-240 (LFSMIGTLFLWMYWPSFNSAI) traverse the membrane as a helical segment. Topologically, residues 241–251 (SYHGDAQHRAA) are extracellular. The helical transmembrane segment at 252–272 (INTYCSLAACVLTTVAISSVV) threads the bilayer. Topologically, residues 273–285 (NKKGKLEMVHIQN) are cytoplasmic. A helical transmembrane segment spans residues 286–306 (ATLAGGVAVGTAAEMMLTPYG). Serine 307 is a topological domain (extracellular). A helical transmembrane segment spans residues 308 to 328 (LIVGFICGIVSTLGFTYLSPI). Residues 329–343 (LSNKLRLHDTCGIHN) are Cytoplasmic-facing. A helical membrane pass occupies residues 344 to 364 (LHAIPGLIGGIVGAVTAACAT). The Extracellular portion of the chain corresponds to 365–396 (EGVYTAEGLKKMFHFEGEYADRTPSIQGIYQA). The chain crosses the membrane as a helical span at residues 397-417 (AGIGVSLAFGIVGGTVVGCIL). Topologically, residues 418-473 (KLPIWGDPSDENCFDDDVYWELREEDEEEHLGAANQYITHLPENFKLPDRTEISFK) are cytoplasmic.

It belongs to the ammonium transporter (TC 2.A.49) family. Rh subfamily. As to quaternary structure, homotrimer.

Its subcellular location is the apical cell membrane. Functionally, functions as an ammonia transporter. This chain is Ammonium transporter Rh type C (rhcg), found in Xenopus laevis (African clawed frog).